A 114-amino-acid polypeptide reads, in one-letter code: UPF0342 protein LCABL_19440 (114 aa).

The protein belongs to the UPF0342 family.

In Lacticaseibacillus casei (strain BL23) (Lactobacillus casei), this protein is UPF0342 protein LCABL_19440.